Consider the following 258-residue polypeptide: Electron transfer flavoprotein beta subunit lysine methyltransferase (258 aa).

The protein belongs to the methyltransferase superfamily. ETFBKMT family.

Its subcellular location is the cytoplasm. It is found in the mitochondrion matrix. The enzyme catalyses L-lysyl-[protein] + 3 S-adenosyl-L-methionine = N(6),N(6),N(6)-trimethyl-L-lysyl-[protein] + 3 S-adenosyl-L-homocysteine + 3 H(+). Functionally, protein-lysine methyltransferase that selectively trimethylates the flavoprotein ETFB in mitochondria. Thereby, may negatively regulate the function of ETFB in electron transfer from Acyl-CoA dehydrogenases to the main respiratory chain. The chain is Electron transfer flavoprotein beta subunit lysine methyltransferase from Danio rerio (Zebrafish).